Reading from the N-terminus, the 121-residue chain is Phosphoribosyl-ATP pyrophosphatase (121 aa).

The protein belongs to the PRA-PH family.

It is found in the cytoplasm. It catalyses the reaction 1-(5-phospho-beta-D-ribosyl)-ATP + H2O = 1-(5-phospho-beta-D-ribosyl)-5'-AMP + diphosphate + H(+). The protein operates within amino-acid biosynthesis; L-histidine biosynthesis; L-histidine from 5-phospho-alpha-D-ribose 1-diphosphate: step 2/9. This Burkholderia ambifaria (strain MC40-6) protein is Phosphoribosyl-ATP pyrophosphatase.